Consider the following 476-residue polypeptide: Inosine-5'-monophosphate dehydrogenase (476 aa).

CBS domains follow at residues 92 to 150 (MIEN…IADV) and 151 to 207 (MTKD…PNAS). Residues D244 and 294-296 (GVG) each bind NAD(+). Residues G296 and G298 each contribute to the K(+) site. S299 contacts IMP. C301 lines the K(+) pocket. C301 serves as the catalytic Thioimidate intermediate. Residues 334 to 336 (DGG), 357 to 358 (GS), 381 to 385 (YRGMA), and E413 each bind IMP. Positions 467 and 468 each coordinate K(+).

Belongs to the IMPDH/GMPR family. In terms of assembly, homotetramer. K(+) serves as cofactor.

It catalyses the reaction IMP + NAD(+) + H2O = XMP + NADH + H(+). Its pathway is purine metabolism; XMP biosynthesis via de novo pathway; XMP from IMP: step 1/1. Mycophenolic acid (MPA) is a non-competitive inhibitor that prevents formation of the closed enzyme conformation by binding to the same site as the amobile flap. In contrast, mizoribine monophosphate (MZP) is a competitive inhibitor that induces the closed conformation. MPA is a potent inhibitor of mammalian IMPDHs but a poor inhibitor of the bacterial enzymes. MZP is a more potent inhibitor of bacterial IMPDH. Its function is as follows. Catalyzes the conversion of inosine 5'-phosphate (IMP) to xanthosine 5'-phosphate (XMP), the first committed and rate-limiting step in the de novo synthesis of guanine nucleotides, and therefore plays an important role in the regulation of cell growth. This Nitrosopumilus maritimus (strain SCM1) protein is Inosine-5'-monophosphate dehydrogenase.